The sequence spans 1830 residues: MSPGDSALDYAKRQAGNVSSQAPSRPSSENDANGTVSTSNEHPSNEAGPSRPRSMGSERSASPQQGTTPKVPTKRRRLNAELAFSSPGPAFQVEQHGSEAQSDSNDSSGRARRPRRSTTLTKSGSNESQDRRSSAHIPKRKEEAGESRNLAESVPKNKLKLNNGKARASDEVELRESSLSLVLPSRSRSRSKSVVKLEPDQDSAFPQEVATPTLQPTRPKPQITPLTALNPQAALSEILARRRSERIALAQSDLEDVHDGHDMLVRELFHLTKFVTMVGYDPDVARTDQSDVFTTFKHAHDLRFSLDDSGSGAEASTAARVTRRRVNARLESLSLKRPDPPSTPSTPSFSKVKVDDDKKSAPEGRRNRRFSSVTGAQPRVNGAHTLETGHSDDTDDSSEEEDSEGSDLDAYSPDGREKGDAKDYNASRKGDAKRARLSSTPHKRHRAKVQDASSNAPVKRTGPRKSKALDELDAFILRQQPRPLPDHPPPLHILAPHQIPAHRRFGGDLDALYESFNMLQDDEGGLEDDDLETYIKLDQRWRAGLPIHPEAGSTTRHAVQKVPRNKSHHDHLLESVTSSYSQMRQYAKLKQQNSRKVARMIAQHWERQLGTSEREKKAEERRLRALAKWTLREVLKQWRLAVNVVRARKAAAEKAEKEKSDKEQLNAILEQSTAMLKKQHEVMTRADSLDDSDDEGSDRTNYGSDGSAESEISDIDDDDNQLIQIQDELPSVSPEQSLDMLTPVPEEADGSKDRVSNTTDHEAATANGDPTVVVESESQPSRRPQRRTARTKTFKARDSKLDADDIEFNDAGNDDEQEDAELERQMLEEDEEDDSEDAGLAADANIPIEELLKRYGYGQEADQDAEDSDAGEDAVSNDDSLENSATKDGSEDVAAVASIKIQEDAEVEEERPVQEDSMPDEAMDLEDDAVSTALNRPSDALLVDDHSDAESAATSGRRSSRRSMTRASSIVSSDRHATRLRQPFLLRGQLRPYQQIGFEWLCSLYANGVNGILADEMGLGKTIQTISLLAHLACDKGVWGPHLVVAPTSVMLNWEVEFKKFLPGFKILSYYGNQKERKEKRIGWNTENSFNVCITSYQLVLADQHIFRRKPWVYLVLDEAHHIKNFRSQRWQTLLGFNSQRRLLLTGTPLQNNLMDLWSLMYFLMPNGATELPGGGAFANMKDFQDWFSNPLDKAIEGGTSMNDETRAMVQKLHAVLRPYLLRRLKSEVEKELPSKYEHVITCRLSKRQRFLYNDFMSRAKTRESLASGNYLSIINCLMQLRKVCNHPDLFEVRPIVTSFAMSRSVVADYEIKDLLVRRRLLQENVWEKVDLDVTNLRITDGEEHLTAIESRDLRRLNAAKKLPHFREAVPEPRELDTWTLEGFERSREQRKLVDRMEKWKHMAYLNQYRCTKRPIYGSGLIKMLTEAGEAARLEPLEQHESDRRGFLTRCDSVLRIVQSRSTRRENMQALIDRFAFVTPRAVAVDMPRWALPGLEAHQRPDMVKREFDTVHPVAVKLHIAFPDASLLQYDCGKLQQLDILMRRLKEGGHRILIFTQMTRVLDILESFLNYHGYRYLRLDGATKVESRQALTEQFNRDARISAFILSTRSGGLGINLTGADTVLFYDLDWNAAIEAQCMDRAHRIGQTRDVHIYRFVTEHTIEENMLRKANQKRLLDNVVIQQGEFNTETLAKRLDWTDMLDESGKIGDVEVVVADQGVGARDVESAFLQAEDDEDRQAALRARHEMFIDDADFEEHQPSTSRPNTASATPLAHTASDGARPDNGAHAADALDAHEIENEHQEQEQEQEQAASIDDYMLAFVESDWPFFA.

Disordered stretches follow at residues 1–204 (MSPG…QDSA) and 329–465 (RLES…GPRK). Polar residues-rich tracts occupy residues 16-42 (GNVS…SNEH), 57-70 (SERS…TTPK), 98-108 (SEAQSDSNDSS), and 117-127 (STTLTKSGSNE). The segment covering 167 to 176 (RASDEVELRE) has biased composition (basic and acidic residues). The segment covering 177-186 (SSLSLVLPSR) has biased composition (low complexity). Over residues 352–365 (VKVDDDKKSAPEGR) the composition is skewed to basic and acidic residues. Positions 393–407 (DTDDSSEEEDSEGSD) are enriched in acidic residues. The span at 414–434 (DGREKGDAKDYNASRKGDAKR) shows a compositional bias: basic and acidic residues. Residues 556-628 (RHAVQKVPRN…EERRLRALAK (73 aa)) form the HSA domain. Positions 602–679 (AQHWERQLGT…EQSTAMLKKQ (78 aa)) form a coiled coil. 2 disordered regions span residues 681–921 (EVMT…MPDE) and 940–974 (ALLV…VSSD). The segment covering 711–720 (EISDIDDDDN) has biased composition (acidic residues). Residues 749-763 (DGSKDRVSNTTDHEA) show a composition bias toward basic and acidic residues. The segment covering 783-794 (RPQRRTARTKTF) has biased composition (basic residues). Acidic residues-rich tracts occupy residues 804 to 821 (DDIE…EDAE), 828 to 837 (EEDEEDDSED), and 861 to 881 (ADQD…DDSL). In terms of domain architecture, Helicase ATP-binding spans 1002-1167 (CSLYANGVNG…WSLMYFLMPN (166 aa)). Residue 1015–1022 (DEMGLGKT) participates in ATP binding. The short motif at 1118–1121 (DEAH) is the DEAH box element. One can recognise a Helicase C-terminal domain in the interval 1537–1692 (QLDILMRRLK…QGEFNTETLA (156 aa)). Positions 1754–1814 (FEEHQPSTSR…EQEQEQAASI (61 aa)) are disordered. The segment covering 1759–1769 (PSTSRPNTASA) has biased composition (polar residues). A compositionally biased stretch (basic and acidic residues) spans 1790 to 1804 (DALDAHEIENEHQEQ).

This sequence belongs to the SNF2/RAD54 helicase family. SWR1 subfamily. In terms of assembly, component of the SWR1 chromatin-remodeling complex.

The protein localises to the nucleus. It carries out the reaction ATP + H2O = ADP + phosphate + H(+). In terms of biological role, catalytic component of the SWR1 complex which mediates the ATP-dependent exchange of histone H2A for the H2A variant HZT1 leading to transcriptional regulation of selected genes by chromatin remodeling. In Mycosarcoma maydis (Corn smut fungus), this protein is Helicase SWR1 (SWR1).